A 331-amino-acid chain; its full sequence is Bifunctional nuclease 1 (331 aa).

The 136-residue stretch at 126–261 (CVQNNPRVLR…RIAYNNGLKV (136 aa)) folds into the BFN domain. A UVR domain is found at 291–326 (EAQEFDLVRNMLVAAVEERYKDAAQYRDQLFMFRAK).

Belongs to the bifunctional nuclease family.

It is found in the nucleus. Bifunctional nuclease with both RNase and DNase activities. Involved in basal defense response. Participates in abscisic acid-derived callose deposition following infection by a necrotrophic pathogen. This chain is Bifunctional nuclease 1 (BBD1), found in Oryza sativa subsp. indica (Rice).